The following is a 96-amino-acid chain: Phosphoribosyl-ATP pyrophosphatase (96 aa).

This sequence belongs to the PRA-PH family.

Its subcellular location is the cytoplasm. It catalyses the reaction 1-(5-phospho-beta-D-ribosyl)-ATP + H2O = 1-(5-phospho-beta-D-ribosyl)-5'-AMP + diphosphate + H(+). The protein operates within amino-acid biosynthesis; L-histidine biosynthesis; L-histidine from 5-phospho-alpha-D-ribose 1-diphosphate: step 2/9. The protein is Phosphoribosyl-ATP pyrophosphatase of Methanobrevibacter smithii (strain ATCC 35061 / DSM 861 / OCM 144 / PS).